A 387-amino-acid polypeptide reads, in one-letter code: Type 2 DNA topoisomerase 6 subunit A (387 aa).

A Topo IIA-type catalytic domain is found at 12-160 (EARKKALAVF…MLILSKEKGK (149 aa)). Tyrosine 106 functions as the O-(5'-phospho-DNA)-tyrosine intermediate in the catalytic mechanism. Residues glutamate 207 and aspartate 259 each contribute to the Mg(2+) site.

The protein belongs to the TOP6A family. As to quaternary structure, homodimer. Heterotetramer of two Top6A and two Top6B chains. The cofactor is Mg(2+).

It carries out the reaction ATP-dependent breakage, passage and rejoining of double-stranded DNA.. Relaxes both positive and negative superturns and exhibits a strong decatenase activity. The polypeptide is Type 2 DNA topoisomerase 6 subunit A (Hyperthermus butylicus (strain DSM 5456 / JCM 9403 / PLM1-5)).